The primary structure comprises 228 residues: ATP-dependent dethiobiotin synthetase BioD (228 aa).

12 to 17 (EIGKTT) lines the ATP pocket. T16 serves as a coordination point for Mg(2+). The active site involves K37. S41 lines the substrate pocket. Residues D54, 116 to 119 (EGAG), and 205 to 207 (PRL) each bind ATP. Residues D54 and E116 each contribute to the Mg(2+) site.

It belongs to the dethiobiotin synthetase family. As to quaternary structure, homodimer. Mg(2+) serves as cofactor.

It is found in the cytoplasm. It carries out the reaction (7R,8S)-7,8-diammoniononanoate + CO2 + ATP = (4R,5S)-dethiobiotin + ADP + phosphate + 3 H(+). It participates in cofactor biosynthesis; biotin biosynthesis; biotin from 7,8-diaminononanoate: step 1/2. In terms of biological role, catalyzes a mechanistically unusual reaction, the ATP-dependent insertion of CO2 between the N7 and N8 nitrogen atoms of 7,8-diaminopelargonic acid (DAPA, also called 7,8-diammoniononanoate) to form a ureido ring. This is ATP-dependent dethiobiotin synthetase BioD from Pseudomonas aeruginosa (strain LESB58).